A 218-amino-acid chain; its full sequence is UPF0598 protein C8orf82 homolog (218 aa).

Belongs to the UPF0598 family.

This chain is UPF0598 protein C8orf82 homolog, found in Rattus norvegicus (Rat).